We begin with the raw amino-acid sequence, 334 residues long: Transaldolase (334 aa).

Ser-2 carries the N-acetylserine modification. Lys-143 serves as the catalytic Schiff-base intermediate with substrate.

Belongs to the transaldolase family. Type 1 subfamily. As to quaternary structure, homodimer.

It carries out the reaction D-sedoheptulose 7-phosphate + D-glyceraldehyde 3-phosphate = D-erythrose 4-phosphate + beta-D-fructose 6-phosphate. The protein operates within carbohydrate degradation; pentose phosphate pathway; D-glyceraldehyde 3-phosphate and beta-D-fructose 6-phosphate from D-ribose 5-phosphate and D-xylulose 5-phosphate (non-oxidative stage): step 2/3. In terms of biological role, transaldolase is important for the balance of metabolites in the pentose-phosphate pathway. In Kluyveromyces lactis (strain ATCC 8585 / CBS 2359 / DSM 70799 / NBRC 1267 / NRRL Y-1140 / WM37) (Yeast), this protein is Transaldolase (TAL1).